A 346-amino-acid polypeptide reads, in one-letter code: uncharacterized protein (346 aa).

This is an uncharacterized protein from Schizosaccharomyces pombe (strain 972 / ATCC 24843) (Fission yeast).